The primary structure comprises 425 residues: Glutamyl-tRNA reductase (425 aa).

Residues 49–52, Ser-107, 112–114, and Gln-118 contribute to the substrate site; these read TCNR and EPQ. Residue Cys-50 is the Nucleophile of the active site. 187 to 192 is an NADP(+) binding site; that stretch reads GAGETI.

It belongs to the glutamyl-tRNA reductase family. Homodimer.

The enzyme catalyses (S)-4-amino-5-oxopentanoate + tRNA(Glu) + NADP(+) = L-glutamyl-tRNA(Glu) + NADPH + H(+). Its pathway is porphyrin-containing compound metabolism; protoporphyrin-IX biosynthesis; 5-aminolevulinate from L-glutamyl-tRNA(Glu): step 1/2. Catalyzes the NADPH-dependent reduction of glutamyl-tRNA(Glu) to glutamate 1-semialdehyde (GSA). The polypeptide is Glutamyl-tRNA reductase (Pseudomonas savastanoi pv. phaseolicola (strain 1448A / Race 6) (Pseudomonas syringae pv. phaseolicola (strain 1448A / Race 6))).